The chain runs to 496 residues: MAWALKLPLADEVIESGLVQDFDASLSGIGQELGAGAYSMSDVLALPIFKQEESSLPPENENKILPFQYVLCAATSPAVKLHDETLTYLNQGQSYEIRMLDNRKIGELPEINGKLVKSIFRVVFHDRRLQYTEHQQLEGWRWNRPGDRILDIDIPMSVGIIDPRANPTQLNTVEFLWDPSKRTSVFIQVHCISTEFTMRKHGGEKGVPFRVQIDTFKENENGEYTEHLHSASCQIKVFKPKGADRKQKTDREKMEKRTPHEKEKYQPSYETTILTECSPWPEITYVNNAPSPGFNSSHSSFSIGEGNGSPNHQPEPPPPIADNLLPTSTPQEAQQWLHRNRFSTFSRLFRNFSGADLLKLTREDVIQICGPADGIRLFNALKGRMVRPRLTIYVCQESQQLQELQQKHEDGDAVTSTFFVYHAIYLEELTAVELTEKLAQLFSISSQQISQIYKQGPTGIHVLISDEMIQNFQDESCFVLDTMKAETNDSYHIILK.

Residues 61-300 form the Grh/CP2 DB domain; that stretch reads ENKILPFQYV…SPGFNSSHSS (240 aa). The interval 133 to 386 is DNA-binding; that stretch reads EHQQLEGWRW…LFNALKGRMV (254 aa). Disordered regions lie at residues 238–268 and 296–327; these read FKPK…YQPS and SSHS…LLPT. Positions 241-265 are enriched in basic and acidic residues; it reads KGADRKQKTDREKMEKRTPHEKEKY.

It belongs to the grh/CP2 family. CP2 subfamily. Component of the SSP (stage selector protein) complex, which appears to be a heteromer of TFCP2 and 2 copies of NFE4. In terms of tissue distribution, expressed in the epiblast at the pre-primitive streak stage. At the primitive streak stage, expressed in the extending primitive streak and in the prospective neural plate. At stages 7 and 8, expressed in the neural folds, somites and in the regressing primitive streak. At stage 12, ubiquitously expressed in the whole embryo.

Its subcellular location is the nucleus. Its function is as follows. Binds the B-response element 5'-CAAGTCCAGGCAAGT-3' of the ENS1/ERNI promoter. May be the major transcription activator thus being essential for its expression. The polypeptide is Transcription factor CP2 (TFCP2) (Gallus gallus (Chicken)).